Consider the following 359-residue polypeptide: Tyrosine-protein phosphatase non-receptor type 7 (359 aa).

Residues 1-34 (MVQACEGRSRAQLPTLSLGADMTQPPPAKAPAKK) form a disordered region. The interval 38 to 51 (LQERRGSSVALMLD) is interaction with MAP kinases. Ser-44 is subject to Phosphoserine. Thr-66 is modified (phosphothreonine). A phosphoserine mark is found at Ser-93 and Ser-143. Residues 97–349 (LEEEFLKIPS…QFLHHTLALY (253 aa)) enclose the Tyrosine-protein phosphatase domain. Substrate contacts are provided by residues Asp-257, 290–296 (CSAGIGR), and Gln-334. Cys-290 functions as the Phosphocysteine intermediate in the catalytic mechanism. Cys-290 is modified (cysteine sulfenic acid (-SOH)).

Belongs to the protein-tyrosine phosphatase family. Non-receptor class subfamily. Oxidized at active site cysteine. Treatment with pervanadate (vanadate and H(2)O(2)) or with antigen enhanced oxidation of active site cysteine.

The protein localises to the cytoplasm. Its subcellular location is the cytoskeleton. It catalyses the reaction O-phospho-L-tyrosyl-[protein] + H2O = L-tyrosyl-[protein] + phosphate. With respect to regulation, inhibited in cells after FCER1A triggering. Functionally, may play a role in the regulation of T and B-lymphocyte development and signal transduction. The polypeptide is Tyrosine-protein phosphatase non-receptor type 7 (Ptpn7) (Rattus norvegicus (Rat)).